The primary structure comprises 120 residues: NAD(P)H-quinone oxidoreductase subunit 3, chloroplastic (120 aa).

A run of 3 helical transmembrane segments spans residues 9–29 (IFWA…LISG), 64–84 (MFAL…PWAM), and 88–108 (VLGV…IVGS).

Belongs to the complex I subunit 3 family. NDH is composed of at least 16 different subunits, 5 of which are encoded in the nucleus.

The protein localises to the plastid. It localises to the chloroplast thylakoid membrane. It carries out the reaction a plastoquinone + NADH + (n+1) H(+)(in) = a plastoquinol + NAD(+) + n H(+)(out). The catalysed reaction is a plastoquinone + NADPH + (n+1) H(+)(in) = a plastoquinol + NADP(+) + n H(+)(out). Functionally, NDH shuttles electrons from NAD(P)H:plastoquinone, via FMN and iron-sulfur (Fe-S) centers, to quinones in the photosynthetic chain and possibly in a chloroplast respiratory chain. The immediate electron acceptor for the enzyme in this species is believed to be plastoquinone. Couples the redox reaction to proton translocation, and thus conserves the redox energy in a proton gradient. The chain is NAD(P)H-quinone oxidoreductase subunit 3, chloroplastic from Gossypium hirsutum (Upland cotton).